A 178-amino-acid chain; its full sequence is MSRIGNKVIVLPAGVELANNDNVVTVKGPKGELTREFSKDIEIRVEGTEITLHRPNDSKEMKTIHGTTRALLNNMVVGVSEGFKKELEMRGVGYRAQLQGSKLVLAVGKSHPDEVEAPEGITFELPNPTTIVVSGISKEVVGQTAAYVRSLRSPEPYKGKGIRYVGEFVRRKEGKTGK.

Belongs to the universal ribosomal protein uL6 family. Part of the 50S ribosomal subunit.

This protein binds to the 23S rRNA, and is important in its secondary structure. It is located near the subunit interface in the base of the L7/L12 stalk, and near the tRNA binding site of the peptidyltransferase center. The sequence is that of Large ribosomal subunit protein uL6 from Streptococcus pneumoniae (strain ATCC 700669 / Spain 23F-1).